The sequence spans 168 residues: tRNA-splicing endonuclease subunit Sen15 (168 aa).

Residues 1–32 (MEERSDSEPTPGCSGPGPAPVRDGGGAHTWAP) form a disordered region. Ser7 and Ser165 each carry phosphoserine.

The protein belongs to the SEN15 family. As to quaternary structure, homodimer. tRNA splicing endonuclease is a heterotetramer composed of TSEN2, TSEN15, TSEN34/LENG5 and TSEN54. tRNA splicing endonuclease complex also contains proteins of the pre-mRNA 3' end processing machinery such as CLP1, CPSF1, CPSF4 and CSTF2.

The protein resides in the nucleus. It is found in the nucleolus. Its function is as follows. Non-catalytic subunit of the tRNA-splicing endonuclease complex, a complex responsible for identification and cleavage of the splice sites in pre-tRNA. It cleaves pre-tRNA at the 5' and 3' splice sites to release the intron. The products are an intron and two tRNA half-molecules bearing 2',3' cyclic phosphate and 5'-OH termini. There are no conserved sequences at the splice sites, but the intron is invariably located at the same site in the gene, placing the splice sites an invariant distance from the constant structural features of the tRNA body. The tRNA splicing endonuclease is also involved in mRNA processing via its association with pre-mRNA 3'-end processing factors, establishing a link between pre-tRNA splicing and pre-mRNA 3'-end formation, suggesting that the endonuclease subunits function in multiple RNA-processing events. In Mus musculus (Mouse), this protein is tRNA-splicing endonuclease subunit Sen15 (Tsen15).